We begin with the raw amino-acid sequence, 303 residues long: Probable cell division protein WhiA (303 aa).

Residues 272–303 (SIQQLADSLSTPLTKSGVNHRLRKINKIADEL) constitute a DNA-binding region (H-T-H motif).

The protein belongs to the WhiA family.

Involved in cell division and chromosome segregation. The chain is Probable cell division protein WhiA from Streptococcus pneumoniae (strain ATCC 700669 / Spain 23F-1).